Here is a 348-residue protein sequence, read N- to C-terminus: Holliday junction branch migration complex subunit RuvB (348 aa).

Residues 4-184 (ADRLIAASGR…FGIVQRLEFY (181 aa)) are large ATPase domain (RuvB-L). Residues I23, R24, G65, K68, T69, T70, 131 to 133 (EDF), R174, Y184, and R221 contribute to the ATP site. T69 is a binding site for Mg(2+). Positions 185-255 (SDKDLATIVS…VADMALNLLD (71 aa)) are small ATPAse domain (RuvB-S). The head domain (RuvB-H) stretch occupies residues 258–348 (ERGFDHSDRR…GGDFSEPGDE (91 aa)). Positions 294, 313, and 318 each coordinate DNA.

This sequence belongs to the RuvB family. As to quaternary structure, homohexamer. Forms an RuvA(8)-RuvB(12)-Holliday junction (HJ) complex. HJ DNA is sandwiched between 2 RuvA tetramers; dsDNA enters through RuvA and exits via RuvB. An RuvB hexamer assembles on each DNA strand where it exits the tetramer. Each RuvB hexamer is contacted by two RuvA subunits (via domain III) on 2 adjacent RuvB subunits; this complex drives branch migration. In the full resolvosome a probable DNA-RuvA(4)-RuvB(12)-RuvC(2) complex forms which resolves the HJ.

It localises to the cytoplasm. The enzyme catalyses ATP + H2O = ADP + phosphate + H(+). The RuvA-RuvB-RuvC complex processes Holliday junction (HJ) DNA during genetic recombination and DNA repair, while the RuvA-RuvB complex plays an important role in the rescue of blocked DNA replication forks via replication fork reversal (RFR). RuvA specifically binds to HJ cruciform DNA, conferring on it an open structure. The RuvB hexamer acts as an ATP-dependent pump, pulling dsDNA into and through the RuvAB complex. RuvB forms 2 homohexamers on either side of HJ DNA bound by 1 or 2 RuvA tetramers; 4 subunits per hexamer contact DNA at a time. Coordinated motions by a converter formed by DNA-disengaged RuvB subunits stimulates ATP hydrolysis and nucleotide exchange. Immobilization of the converter enables RuvB to convert the ATP-contained energy into a lever motion, pulling 2 nucleotides of DNA out of the RuvA tetramer per ATP hydrolyzed, thus driving DNA branch migration. The RuvB motors rotate together with the DNA substrate, which together with the progressing nucleotide cycle form the mechanistic basis for DNA recombination by continuous HJ branch migration. Branch migration allows RuvC to scan DNA until it finds its consensus sequence, where it cleaves and resolves cruciform DNA. The protein is Holliday junction branch migration complex subunit RuvB of Pseudomonas putida (strain GB-1).